A 473-amino-acid chain; its full sequence is ATP synthase subunit beta (473 aa).

158–165 (GGAGVGKT) contacts ATP.

It belongs to the ATPase alpha/beta chains family. F-type ATPases have 2 components, CF(1) - the catalytic core - and CF(0) - the membrane proton channel. CF(1) has five subunits: alpha(3), beta(3), gamma(1), delta(1), epsilon(1). CF(0) has three main subunits: a(1), b(2) and c(9-12). The alpha and beta chains form an alternating ring which encloses part of the gamma chain. CF(1) is attached to CF(0) by a central stalk formed by the gamma and epsilon chains, while a peripheral stalk is formed by the delta and b chains.

The protein resides in the cell membrane. The catalysed reaction is ATP + H2O + 4 H(+)(in) = ADP + phosphate + 5 H(+)(out). In terms of biological role, produces ATP from ADP in the presence of a proton gradient across the membrane. The catalytic sites are hosted primarily by the beta subunits. The sequence is that of ATP synthase subunit beta from Carboxydothermus hydrogenoformans (strain ATCC BAA-161 / DSM 6008 / Z-2901).